The sequence spans 386 residues: L-prolyl-[peptidyl-carrier protein] dehydrogenase (386 aa).

FAD contacts are provided by residues 125 to 134 and 158 to 160; these read NAATEPDAGS and FIT. Glu244 acts as the Proton acceptor in catalysis. FAD is bound by residues Arg270, Gln281, 338-342, and 367-369; these read QTFGG and TND.

The protein belongs to the acyl-CoA dehydrogenase family. FAD serves as cofactor.

It carries out the reaction L-prolyl-[peptidyl-carrier protein] + 2 oxidized [electron-transfer flavoprotein] + H(+) = (1H-pyrrole-2-carbonyl)-[peptidyl-carrier protein] + 2 reduced [electron-transfer flavoprotein]. It functions in the pathway antibiotic biosynthesis; prodigiosin biosynthesis. Its function is as follows. Involved in the biosynthesis of 4-methoxy-2,2'-bipyrrole-5-carbaldehyde (MBC), one of the terminal products involved in the biosynthesis of the red antibiotic prodigiosin (Pig). Catalyzes the desaturation of the L-prolyl-[PigG] to yield 1H-pyrrole-2-carbonyl-[PigG]. The protein is L-prolyl-[peptidyl-carrier protein] dehydrogenase of Serratia sp. (strain ATCC 39006) (Prodigiosinella confusarubida).